Consider the following 213-residue polypeptide: LexA repressor (213 aa).

The segment at residues Q27–E47 is a DNA-binding region (H-T-H motif). Residues S133 and K170 each act as for autocatalytic cleavage activity in the active site.

Belongs to the peptidase S24 family. In terms of assembly, homodimer.

The enzyme catalyses Hydrolysis of Ala-|-Gly bond in repressor LexA.. In terms of biological role, represses a number of genes involved in the response to DNA damage (SOS response), including recA and lexA. In the presence of single-stranded DNA, RecA interacts with LexA causing an autocatalytic cleavage which disrupts the DNA-binding part of LexA, leading to derepression of the SOS regulon and eventually DNA repair. The sequence is that of LexA repressor from Xanthomonas campestris.